Here is a 174-residue protein sequence, read N- to C-terminus: RNA pyrophosphohydrolase (174 aa).

The 144-residue stretch at glycine 6 to lysine 149 folds into the Nudix hydrolase domain. A Nudix box motif is present at residues glycine 38 to glycine 59.

It belongs to the Nudix hydrolase family. RppH subfamily. A divalent metal cation is required as a cofactor.

In terms of biological role, accelerates the degradation of transcripts by removing pyrophosphate from the 5'-end of triphosphorylated RNA, leading to a more labile monophosphorylated state that can stimulate subsequent ribonuclease cleavage. The protein is RNA pyrophosphohydrolase of Shewanella loihica (strain ATCC BAA-1088 / PV-4).